Consider the following 103-residue polypeptide: UPF0145 protein CYB_1351 (103 aa).

Belongs to the UPF0145 family.

This chain is UPF0145 protein CYB_1351, found in Synechococcus sp. (strain JA-2-3B'a(2-13)) (Cyanobacteria bacterium Yellowstone B-Prime).